We begin with the raw amino-acid sequence, 589 residues long: MGLGSSQPSTKEAEPCTLQEKEEHPVDDTRQQNNAVPATVSDPDQVSPAVQDAETQVESIVDKRKNKKGKTEYLVRWKGYDSEDDTWEPEQHLVNCEEYIHDFNRRHNERQKEGTLARANRASPSNARKQISRSTHSALSKTNPKALVVGKDHESKTNQLLATSQKFRKNTAPSLANRKNMDLAKSGIKILVPKSPIKGRTSIDGFHGESPEKLDQGAEDTVTPEVTAEKPTGALLGPGAERARMGSRPRIHSLVPQVSGPVTAAMATTLAVNGKGTSPFMDALTANGTVTIQTSVTGVTAGKRKFIDDRRDQPFDKRLRFSVRQTESAYRYRDIVVRKQDGFTHILLSTKSSENNSLNPEVMKEVQSALSTAAADDSKLVLLSAVGSVFCCGLDFIYFIRRLTDDRKRESTKMAEAIRNFVNTFIQFKKPIIVAVNGPAIGLGASILPLCDVVWANEKAWFQTPYTTFGQSPDGCSTVMFPKIMGGASANEMLLSGRKLTAQEACGKGLVSQVFWPGTFTQEVMVRIKELASCNPIVLEESKALVRCNMKMELEQANERECDALKKIWGSAQGMDSMLKYLQRKIDEF.

The span at 1–10 (MGLGSSQPST) shows a compositional bias: polar residues. Residues 1-57 (MGLGSSQPSTKEAEPCTLQEKEEHPVDDTRQQNNAVPATVSDPDQVSPAVQDAETQV) form a disordered region. The segment covering 11-30 (KEAEPCTLQEKEEHPVDDTR) has biased composition (basic and acidic residues). A Chromo domain is found at 55–115 (TQVESIVDKR…RHNERQKEGT (61 aa)). An interaction with EZH2 region spans residues 55 to 300 (TQVESIVDKR…TIQTSVTGVT (246 aa)). Ser-82 bears the Phosphoserine mark. A disordered region spans residues 110 to 155 (RQKEGTLARANRASPSNARKQISRSTHSALSKTNPKALVVGKDHES). Residues 117–128 (ARANRASPSNAR) are compositionally biased toward low complexity. The residue at position 129 (Lys-129) is an N6,N6,N6-trimethyllysine; by EHMT2; alternate. Lys-129 bears the N6,N6-dimethyllysine; by EHMT2; alternate mark. The residue at position 129 (Lys-129) is an N6-methyllysine; by EHMT2; alternate. The segment covering 132–143 (SRSTHSALSKTN) has biased composition (polar residues). Phosphoserine occurs at positions 164, 195, and 210. The interval 202–224 (SIDGFHGESPEKLDQGAEDTVTP) is disordered. Basic and acidic residues predominate over residues 206-216 (FHGESPEKLDQ). Residues 353–585 (SENNSLNPEV…DSMLKYLQRK (233 aa)) are acetyl-CoA-binding domain.

Forms multimers and multimerization is required for stable binding to chromatin. Interacts with HDAC1 and HDAC2 via its C-terminal acetyl-CoA-binding domain. Interacts with EZH2, EED, SUZ12, REST, EHMT1 and EHMT2. Part of a complex containing at least CDYL, REST, WIZ, SETB1, EHMT1 and EHMT2. Part of a complex containing at least CDYL, MIER1, MIER2, HDAC1 and HDAC2. Interacts with CHAF1A and CHAF1B; bridging the CAF-1 complex to the MCM2-7 (MCM) complex. Interacts with MCM3 and MCM5; bridging the CAF-1 complex to the MCM2-7 (MCM) complex. Recruited to Xist RNA-coated X chromosome. Interacts with EHMT2 and PRDM9; interaction only takes place when PRDM9 is bound to hotspot DNA. In terms of tissue distribution, expressed in the brain, with expression in the hippocampal dentate gyrus, CA1, striatum and cortex (at protein level). Expressed in the prelimbic cortex.

The protein resides in the nucleus. Its subcellular location is the chromosome. The catalysed reaction is 3-hydroxybutanoyl-CoA = (2E)-butenoyl-CoA + H2O. Chromatin reader protein that recognizes and binds histone H3 trimethylated at 'Lys-9', dimethylated at 'Lys-27' and trimethylated at 'Lys-27' (H3K9me3, H3K27me2 and H3K27me3, respectively). Part of multimeric repressive chromatin complexes, where it is required for transmission and restoration of repressive histone marks, thereby preserving the epigenetic landscape. Required for chromatin targeting and maximal enzymatic activity of Polycomb repressive complex 2 (PRC2); acts as a positive regulator of PRC2 activity by bridging the pre-existing histone H3K27me3 and newly recruited PRC2 on neighboring nucleosomes. Acts as a corepressor for REST by facilitating histone-lysine N-methyltransferase EHMT2 recruitment and H3K9 dimethylation at REST target genes for repression. Involved in X chromosome inactivation in females: recruited to Xist RNA-coated X chromosome and facilitates propagation of H3K9me2 by anchoring EHMT2. Promotes EZH2 accumulation and H3K27me3 methylation at DNA double strand breaks (DSBs), thereby facilitating transcriptional repression at sites of DNA damage and homology-directed repair of DSBs. Required for neuronal migration during brain development by repressing expression of RHOA. By repressing the expression of SCN8A, contributes to the inhibition of intrinsic neuronal excitability and epileptogenesis. In addition to acting as a chromatin reader, acts as a hydro-lyase. Shows crotonyl-coA hydratase activity by mediating the conversion of crotonyl-CoA ((2E)-butenoyl-CoA) to beta-hydroxybutyryl-CoA (3-hydroxybutanoyl-CoA), thereby acting as a negative regulator of histone crotonylation. Histone crotonylation is required during spermatogenesis; down-regulation of histone crotonylation by CDYL regulates the reactivation of sex chromosome-linked genes in round spermatids and histone replacement in elongating spermatids. By regulating histone crotonylation and trimethylation of H3K27, may be involved in stress-induced depression-like behaviors, possibly by regulating VGF expression. Displays acetyltransferase activity toward tubulin in vitro; such activity is however unsure in vivo and additional evidences would be required to confirm this result. In terms of biological role, not able to recognize and bind histone H3K9me3, histone H3K27me2 and histone H3K27me3, due to the presence of a N-terminal extension that inactivates the chromo domain. This is Chromodomain Y-like protein from Rattus norvegicus (Rat).